A 245-amino-acid chain; its full sequence is Polyhedrin (245 aa).

It belongs to the polyhedrin family.

Functionally, major component of the virus occlusion bodies, which are large proteinaceous structures (polyhedra), that protect the virus from the outside environment for extended periods until they are ingested by insect larvae. The sequence is that of Polyhedrin from Lepidoptera (butterflies and moths).